We begin with the raw amino-acid sequence, 578 residues long: Transmembrane protein 121B (578 aa).

Disordered stretches follow at residues 1-84 (MRPA…ESLS) and 106-129 (AGPA…PTSS). Low complexity-rich tracts occupy residues 8–17 (PRSVSSASGS) and 44–53 (GDSSTSTSTS). The span at 54-67 (RGGGGGRRGGGGGS) shows a compositional bias: gly residues. Ser-167 carries the post-translational modification Phosphoserine. A disordered region spans residues 529–557 (RARGGYGAPPSAPPPPPPPPQGGSQLGHC). Positions 538 to 549 (PSAPPPPPPPPQ) are enriched in pro residues. A Phosphoserine modification is found at Ser-552.

It belongs to the TMEM121 family. Widely expressed, especially in adult heart, brain, prostate, testes, peripherical blood leukocytes and fetal brain.

The chain is Transmembrane protein 121B from Homo sapiens (Human).